We begin with the raw amino-acid sequence, 606 residues long: NADH-ubiquinone oxidoreductase chain 5 (606 aa).

The next 15 helical transmembrane spans lie at 1 to 21 (MNMF…PIIM), 43 to 63 (AFMI…ETIF), 87 to 107 (MIFV…SMWY), 117 to 137 (FFKY…ANNM), 140 to 160 (LFIG…WWYG), 171 to 191 (AVLY…WFLL), 201 to 221 (IFIT…LAAT), 241 to 261 (TPVS…FLLI), 273 to 293 (IQTL…ICAL), 310 to 330 (LGLM…LHIC), 365 to 385 (VLPF…GMPF), 409 to 429 (LLIT…IMFF), 457 to 477 (LLIG…PTTI), 488 to 508 (MTAL…NLTT), and 582 to 602 (GLIK…LLIL).

The protein belongs to the complex I subunit 5 family. As to quaternary structure, core subunit of respiratory chain NADH dehydrogenase (Complex I) which is composed of 45 different subunits.

It is found in the mitochondrion inner membrane. It carries out the reaction a ubiquinone + NADH + 5 H(+)(in) = a ubiquinol + NAD(+) + 4 H(+)(out). Its function is as follows. Core subunit of the mitochondrial membrane respiratory chain NADH dehydrogenase (Complex I) which catalyzes electron transfer from NADH through the respiratory chain, using ubiquinone as an electron acceptor. Essential for the catalytic activity and assembly of complex I. The polypeptide is NADH-ubiquinone oxidoreductase chain 5 (MT-ND5) (Canis lupus familiaris (Dog)).